A 31-amino-acid chain; its full sequence is Photosystem II reaction center protein T (31 aa).

Residues 3–23 (AIVYTFLLVGTLGIIFFAIFF) form a helical membrane-spanning segment.

It belongs to the PsbT family. In terms of assembly, PSII is composed of 1 copy each of membrane proteins PsbA, PsbB, PsbC, PsbD, PsbE, PsbF, PsbH, PsbI, PsbJ, PsbK, PsbL, PsbM, PsbT, PsbY, PsbZ, Psb30/Ycf12, at least 3 peripheral proteins of the oxygen-evolving complex and a large number of cofactors. It forms dimeric complexes.

The protein localises to the plastid. The protein resides in the chloroplast thylakoid membrane. Found at the monomer-monomer interface of the photosystem II (PS II) dimer, plays a role in assembly and dimerization of PSII. PSII is a light-driven water plastoquinone oxidoreductase, using light energy to abstract electrons from H(2)O, generating a proton gradient subsequently used for ATP formation. The sequence is that of Photosystem II reaction center protein T from Ostreococcus tauri.